Consider the following 351-residue polypeptide: Large ribosomal subunit protein uL3 (351 aa).

Disordered stretches follow at residues 1-31 and 246-271; these read MGHR…TPRT and KGSR…GQLG.

Belongs to the universal ribosomal protein uL3 family. Part of the 50S ribosomal subunit. Forms a cluster with proteins L14 and L24e.

Functionally, one of the primary rRNA binding proteins, it binds directly near the 3'-end of the 23S rRNA, where it nucleates assembly of the 50S subunit. This is Large ribosomal subunit protein uL3 from Saccharolobus islandicus (strain M.14.25 / Kamchatka #1) (Sulfolobus islandicus).